The sequence spans 255 residues: Putative Myb family transcription factor At1g14600 (255 aa).

The region spanning 20-80 (RSPVPRLRWT…HLQMYRGSRI (61 aa)) is the HTH myb-type domain. The H-T-H motif DNA-binding region spans 51 to 76 (PKLVLKIMDVKGLTISHVKSHLQMYR). The disordered stretch occupies residues 80 to 110 (ITLLGKPEESSSPSSRRRRRQDNEEDHLHDN).

It is found in the nucleus. Putative transcription factor. This chain is Putative Myb family transcription factor At1g14600, found in Arabidopsis thaliana (Mouse-ear cress).